A 652-amino-acid polypeptide reads, in one-letter code: ATP-dependent zinc metalloprotease FtsH (652 aa).

At 1–11 the chain is on the cytoplasmic side; that stretch reads MKKQNNGLIKN. The chain crosses the membrane as a helical span at residues 12–32; that stretch reads PFLWLLFIFFLVTGFQYFYSG. The Extracellular portion of the chain corresponds to 33 to 131; that stretch reads NNSGGSQQIN…EVTVKHESSS (99 aa). Residues 132-152 traverse the membrane as a helical segment; sequence GIWINLLVSIVPFGILFFFLF. The Cytoplasmic segment spans residues 153–652; it reads SMMGNMGGGN…EVKSKMNDEK (500 aa). 227–234 provides a ligand contact to ATP; the sequence is GPPGTGKT. Histidine 449 is a binding site for Zn(2+). Glutamate 450 is an active-site residue. Histidine 453 and aspartate 525 together coordinate Zn(2+). The segment at 628-652 is disordered; the sequence is MPEAVEEESHALSYDEVKSKMNDEK. The segment covering 634-652 has biased composition (basic and acidic residues); that stretch reads EESHALSYDEVKSKMNDEK.

The protein in the central section; belongs to the AAA ATPase family. In the C-terminal section; belongs to the peptidase M41 family. Homohexamer. The cofactor is Zn(2+).

The protein resides in the cell membrane. Functionally, acts as a processive, ATP-dependent zinc metallopeptidase for both cytoplasmic and membrane proteins. Plays a role in the quality control of integral membrane proteins. This chain is ATP-dependent zinc metalloprotease FtsH, found in Streptococcus pneumoniae serotype 4 (strain ATCC BAA-334 / TIGR4).